Reading from the N-terminus, the 124-residue chain is UPF0102 protein Mmc1_3298 (124 aa).

The protein belongs to the UPF0102 family.

The polypeptide is UPF0102 protein Mmc1_3298 (Magnetococcus marinus (strain ATCC BAA-1437 / JCM 17883 / MC-1)).